The following is a 60-amino-acid chain: Large ribosomal subunit protein uL30 (60 aa).

Belongs to the universal ribosomal protein uL30 family. Part of the 50S ribosomal subunit.

This is Large ribosomal subunit protein uL30 from Mycobacteroides abscessus (strain ATCC 19977 / DSM 44196 / CCUG 20993 / CIP 104536 / JCM 13569 / NCTC 13031 / TMC 1543 / L948) (Mycobacterium abscessus).